A 223-amino-acid polypeptide reads, in one-letter code: Uracil-DNA glycosylase (223 aa).

Catalysis depends on Asp-61, which acts as the Proton acceptor.

It belongs to the uracil-DNA glycosylase (UDG) superfamily. UNG family.

It is found in the cytoplasm. It carries out the reaction Hydrolyzes single-stranded DNA or mismatched double-stranded DNA and polynucleotides, releasing free uracil.. Its function is as follows. Excises uracil residues from the DNA which can arise as a result of misincorporation of dUMP residues by DNA polymerase or due to deamination of cytosine. The sequence is that of Uracil-DNA glycosylase from Histophilus somni (strain 129Pt) (Haemophilus somnus).